The chain runs to 106 residues: Isocitrate dehydrogenase [NAD] subunit gamma, mitochondrial (106 aa).

Belongs to the isocitrate and isopropylmalate dehydrogenases family. Heterooligomer of subunits alpha (IDH3A), beta (IDH3B), and gamma (IDH3G) in the apparent ratio of 2:1:1. The heterodimer containing one IDH3A and one IDH3B subunit and the heterodimer containing one IDH3A and one IDH3G subunit assemble into a heterotetramer (which contains two subunits of IDH3A, one of IDH3B and one of IDH3G) and further into the heterooctamer.

It localises to the mitochondrion. With respect to regulation, the heterotetramer and the heterodimer composed of IDH3A and IDH3G subunits can be allosterically activated by citrate (CIT) or/and ADP, and the two activators can act independently or synergistically. The heterodimer composed of IDH3A and IDH3B subunits cannot be allosterically regulated and the allosteric regulation of the heterotetramer is through the IDH3G subunit and not the IDH3B subunit. The IDH3G subunit contains the allosteric site which consists of a CIT-binding site and an ADP-binding site, and the binding of CIT and ADP causes conformational changes at the allosteric site which are transmitted to the active site in the catalytic subunit (IDH3A) through a cascade of conformational changes at the heterodimer interface, leading to stabilization of the isocitrate-binding at the active site and thus activation of the enzyme. ATP can activate the heterotetramer and the heterodimer composed of IDH3A and IDH3G subunits at low concentrations but inhibits their activities at high concentrations, whereas ATP exhibits only inhibitory effect on the heterodimer composed of IDH3A and IDH3B subunits. Regulatory subunit which plays a role in the allosteric regulation of the enzyme catalyzing the decarboxylation of isocitrate (ICT) into alpha-ketoglutarate. The heterodimer composed of the alpha (IDH3A) and beta (IDH3B) subunits and the heterodimer composed of the alpha (IDH3A) and gamma (IDH3G) subunits, have considerable basal activity but the full activity of the heterotetramer (containing two subunits of IDH3A, one of IDH3B and one of IDH3G) requires the assembly and cooperative function of both heterodimers. This chain is Isocitrate dehydrogenase [NAD] subunit gamma, mitochondrial (IDH3G), found in Sus scrofa (Pig).